A 480-amino-acid polypeptide reads, in one-letter code: UDP-N-acetylmuramate--L-alanine ligase (480 aa).

Position 122–128 (122–128) interacts with ATP; sequence GTHGKTT.

This sequence belongs to the MurCDEF family.

It is found in the cytoplasm. It carries out the reaction UDP-N-acetyl-alpha-D-muramate + L-alanine + ATP = UDP-N-acetyl-alpha-D-muramoyl-L-alanine + ADP + phosphate + H(+). It functions in the pathway cell wall biogenesis; peptidoglycan biosynthesis. Its function is as follows. Cell wall formation. The protein is UDP-N-acetylmuramate--L-alanine ligase of Pseudomonas paraeruginosa (strain DSM 24068 / PA7) (Pseudomonas aeruginosa (strain PA7)).